A 173-amino-acid chain; its full sequence is Cytochrome b6-f complex subunit 4, chloroplastic (173 aa).

A chloroplast-targeting transit peptide spans 1–14 (ESALERRSSSVVMN). The next 3 membrane-spanning stretches (helical) occupy residues 49–69 (LLYM…GLAV), 108–128 (LLGV…PFIE), and 144–164 (SVFL…TLPI).

This sequence belongs to the cytochrome b family. PetD subfamily. As to quaternary structure, the 4 large subunits of the cytochrome b6-f complex are cytochrome b6, subunit IV (17 kDa polypeptide, petD), cytochrome f and the Rieske protein, while the 4 small subunits are petG, petL, petM and petN. The complex functions as a dimer.

The protein resides in the plastid. The protein localises to the chloroplast thylakoid membrane. Functionally, component of the cytochrome b6-f complex, which mediates electron transfer between photosystem II (PSII) and photosystem I (PSI), cyclic electron flow around PSI, and state transitions. The polypeptide is Cytochrome b6-f complex subunit 4, chloroplastic (Euglena gracilis).